The primary structure comprises 543 residues: MLKSLCFVIRPAIVSRPQFRLPTIARLSLRQFQNQPQSVGFFTMAPLETRALALSPSATICPPSRIGTTELDRSAFDLDVQILSAVVEPGMIGKLRSHPSLKDLVLDLPKTKPIVECPAGLAPVAARDVKGLKLLRFHLSKESELPEEAKEVLKGAKALVKEVVRLGYDNWNASEILGACLPTTKSEDIPSSFTTTGHIGHMNLREEWLPFRYLIGQVVLDKNPGLRTIVNKLDTIHAQFRYFDMEVIAGDNDYIATVNESGCSFTFNFSNVYWNSRLHHEHERLISLFPPGCVIADVMAGVGPFAIPAAKKGCYVLGNDLNPESVKWMRENRLRNKVEPTLRVSEIDGFEFIRIAPLEVWTRPFDPAPPPKVSNRQRDREAKEARRKREQAKAAGQPVTETAPMSIPSQEVAIKPHPPQPPKLISHFIMNLPDSAITFLPSYVSCYTPLLAERSFIDEYGGEEEAKRKVEMPMVHCYCFTKEIEIGKAEIDILQRASTNLSFNLTPQVENYNLHHVRSVAPNKDMYCLSFRLPREVAFRHNG.

The transit peptide at 1–59 directs the protein to the mitochondrion; sequence MLKSLCFVIRPAIVSRPQFRLPTIARLSLRQFQNQPQSVGFFTMAPLETRALALSPSAT. S-adenosyl-L-methionine-binding positions include histidine 282, 320–321, and 348–349; these read DL and DG. Residues 366–405 are disordered; sequence DPAPPPKVSNRQRDREAKEARRKREQAKAAGQPVTETAPM. Residue asparagine 431 participates in S-adenosyl-L-methionine binding.

Belongs to the class I-like SAM-binding methyltransferase superfamily. TRM5/TYW2 family. In terms of assembly, monomer.

The protein resides in the mitochondrion matrix. It localises to the nucleus. It is found in the cytoplasm. The catalysed reaction is guanosine(37) in tRNA + S-adenosyl-L-methionine = N(1)-methylguanosine(37) in tRNA + S-adenosyl-L-homocysteine + H(+). In terms of biological role, specifically methylates the N1 position of guanosine-37 in various cytoplasmic and mitochondrial tRNAs. Methylation is not dependent on the nature of the nucleoside 5' of the target nucleoside. This is the first step in the biosynthesis of wybutosine (yW), a modified base adjacent to the anticodon of tRNAs and required for accurate decoding. This Cryptococcus neoformans var. neoformans serotype D (strain JEC21 / ATCC MYA-565) (Filobasidiella neoformans) protein is tRNA (guanine(37)-N(1))-methyltransferase.